The following is a 255-amino-acid chain: tRNA-cytidine(32) 2-sulfurtransferase (255 aa).

The PP-loop motif signature appears at 37-42; sequence SGGKDS. [4Fe-4S] cluster contacts are provided by cysteine 112, cysteine 115, and cysteine 202.

It belongs to the TtcA family. In terms of assembly, homodimer. Requires Mg(2+) as cofactor. The cofactor is [4Fe-4S] cluster.

Its subcellular location is the cytoplasm. It catalyses the reaction cytidine(32) in tRNA + S-sulfanyl-L-cysteinyl-[cysteine desulfurase] + AH2 + ATP = 2-thiocytidine(32) in tRNA + L-cysteinyl-[cysteine desulfurase] + A + AMP + diphosphate + H(+). It functions in the pathway tRNA modification. Catalyzes the ATP-dependent 2-thiolation of cytidine in position 32 of tRNA, to form 2-thiocytidine (s(2)C32). The sulfur atoms are provided by the cysteine/cysteine desulfurase (IscS) system. In Citrifermentans bemidjiense (strain ATCC BAA-1014 / DSM 16622 / JCM 12645 / Bem) (Geobacter bemidjiensis), this protein is tRNA-cytidine(32) 2-sulfurtransferase.